Reading from the N-terminus, the 320-residue chain is ATP-dependent 6-phosphofructokinase (320 aa).

Gly12 is an ATP binding site. ADP-binding positions include 22-26 and 55-60; these read RGVVR and RYSVSD. Residues 73–74 and 103–106 contribute to the ATP site; these read RF and GDGS. A Mg(2+)-binding site is contributed by Asp104. 126–128 provides a ligand contact to substrate; that stretch reads TID. Asp128 (proton acceptor) is an active-site residue. Arg155 contributes to the ADP binding site. Substrate contacts are provided by residues Arg163 and 170–172; that span reads MGR. ADP is bound by residues 186-188, Lys212, and 214-216; these read GCE and KKH. Residues Glu223, Arg244, and 250–253 contribute to the substrate site; that span reads HIQR.

Belongs to the phosphofructokinase type A (PFKA) family. ATP-dependent PFK group I subfamily. Prokaryotic clade 'B1' sub-subfamily. In terms of assembly, homotetramer. Mg(2+) is required as a cofactor.

The protein localises to the cytoplasm. The enzyme catalyses beta-D-fructose 6-phosphate + ATP = beta-D-fructose 1,6-bisphosphate + ADP + H(+). The protein operates within carbohydrate degradation; glycolysis; D-glyceraldehyde 3-phosphate and glycerone phosphate from D-glucose: step 3/4. With respect to regulation, allosterically activated by ADP and other diphosphonucleosides, and allosterically inhibited by phosphoenolpyruvate. Functionally, catalyzes the phosphorylation of D-fructose 6-phosphate to fructose 1,6-bisphosphate by ATP, the first committing step of glycolysis. This is ATP-dependent 6-phosphofructokinase from Pectobacterium carotovorum subsp. carotovorum (strain PC1).